We begin with the raw amino-acid sequence, 610 residues long: Glutamine--fructose-6-phosphate aminotransferase [isomerizing] (610 aa).

C2 acts as the Nucleophile; for GATase activity in catalysis. Residues 2 to 218 (CGIVGAVAQR…EGDVAEMTRR (217 aa)) form the Glutamine amidotransferase type-2 domain. 2 SIS domains span residues 286 to 426 (AAEI…QQQR) and 459 to 600 (LAED…VDQP). The For Fru-6P isomerization activity role is filled by K605.

In terms of assembly, homodimer.

Its subcellular location is the cytoplasm. The enzyme catalyses D-fructose 6-phosphate + L-glutamine = D-glucosamine 6-phosphate + L-glutamate. Functionally, catalyzes the first step in hexosamine metabolism, converting fructose-6P into glucosamine-6P using glutamine as a nitrogen source. The sequence is that of Glutamine--fructose-6-phosphate aminotransferase [isomerizing] from Vibrio cholerae serotype O1 (strain ATCC 39315 / El Tor Inaba N16961).